Reading from the N-terminus, the 175-residue chain is Peptide deformylase (175 aa).

Cysteine 98 and histidine 140 together coordinate Fe cation. Residue glutamate 141 is part of the active site. Histidine 144 contacts Fe cation.

It belongs to the polypeptide deformylase family. The cofactor is Fe(2+).

It catalyses the reaction N-terminal N-formyl-L-methionyl-[peptide] + H2O = N-terminal L-methionyl-[peptide] + formate. Removes the formyl group from the N-terminal Met of newly synthesized proteins. Requires at least a dipeptide for an efficient rate of reaction. N-terminal L-methionine is a prerequisite for activity but the enzyme has broad specificity at other positions. The polypeptide is Peptide deformylase (Nitrobacter hamburgensis (strain DSM 10229 / NCIMB 13809 / X14)).